The following is a 330-amino-acid chain: Phosphate acyltransferase (330 aa).

The protein belongs to the PlsX family. Homodimer. Probably interacts with PlsY.

Its subcellular location is the cytoplasm. It catalyses the reaction a fatty acyl-[ACP] + phosphate = an acyl phosphate + holo-[ACP]. Its pathway is lipid metabolism; phospholipid metabolism. Functionally, catalyzes the reversible formation of acyl-phosphate (acyl-PO(4)) from acyl-[acyl-carrier-protein] (acyl-ACP). This enzyme utilizes acyl-ACP as fatty acyl donor, but not acyl-CoA. The sequence is that of Phosphate acyltransferase from Lysinibacillus sphaericus (strain C3-41).